A 256-amino-acid polypeptide reads, in one-letter code: Enoyl-[acyl-carrier-protein] reductase [NADPH] FabI (256 aa).

NADP(+) contacts are provided by residues Gly-13, 19–20 (SI), 40–44 (RKERS), 66–67 (DV), and Ile-94. Substrate is bound at residue Ala-97. Catalysis depends on proton acceptor residues Tyr-147 and Tyr-157. NADP(+) is bound by residues Lys-164 and 193–197 (IRTLS).

The protein belongs to the short-chain dehydrogenases/reductases (SDR) family. FabI subfamily. In terms of assembly, homotetramer.

The enzyme catalyses a 2,3-saturated acyl-[ACP] + NADP(+) = a (2E)-enoyl-[ACP] + NADPH + H(+). The protein operates within lipid metabolism; fatty acid biosynthesis. In terms of biological role, catalyzes the reduction of a carbon-carbon double bond in an enoyl moiety that is covalently linked to an acyl carrier protein (ACP). Involved in the elongation cycle of fatty acid which are used in the lipid metabolism. This Staphylococcus aureus (strain MRSA252) protein is Enoyl-[acyl-carrier-protein] reductase [NADPH] FabI (fabI).